We begin with the raw amino-acid sequence, 196 residues long: Carnitine operon protein CaiE (196 aa).

The segment at 173–196 (TQPLRQMEENRPRLQGTTDVTPKR) is disordered. Polar residues predominate over residues 187-196 (QGTTDVTPKR).

The protein belongs to the transferase hexapeptide repeat family.

It participates in amine and polyamine metabolism; carnitine metabolism. Overproduction of CaiE stimulates the activity of CaiB and CaiD. In Shigella dysenteriae serotype 1 (strain Sd197), this protein is Carnitine operon protein CaiE.